The primary structure comprises 271 residues: Monalysin (271 aa).

A propeptide spanning residues 1–33 (MTIKEELGQPQSHSIELDEVSKEAASTRAALTS) is cleaved from the precursor. The segment at 102-170 (IPQNVTTTLS…FTDTTEMKGP (69 aa)) is pore-forming domain.

In terms of assembly, pro-Monalysin forms a stable donut-like 18-mer complex composed of two disk-shaped nonamers held together by N-terminal swapping of the pro-peptides. After proteolytic cleavage, the inactive 18-mer complex probably dissociates into two disk-shaped active nonamers in which the transmembrane segments are unmasked and ready to engage the conformational change leading to the pore formation into the target membrane. Multimerizes into circular-like structures and barrel-like aggregates. In terms of processing, requires N-terminal cleavage to become fully active. The metalloprotease AprA can induce the rapid cleavage of pro-Monalysin into its active form. Can also be processed by trypsin.

The protein resides in the secreted. Its subcellular location is the host cell membrane. Pore-forming toxin that contributes to the virulence of P.entomophila against Drosophila, playing an important role in host intestinal damage and lethality. Displays cytolytic and hemolytic activity. This chain is Monalysin, found in Pseudomonas entomophila (strain L48).